Reading from the N-terminus, the 225-residue chain is MALLISLPGETPAMAQILLLLSSACLHAGNSARSNGGNDFGVNQPERCSGVQGGSIDIPFSFYFPWKLAKDPQMSIAWRWKDFFGHFIYNSSMPFIHEHFKGRLILNWTQGQTSGVLRILNFKESDQTWYFCRVFLQTTEGIKFWQSLPGTQLTLTQALNTTMRSPFIVTSEFTTAGLEHTRDKRNPSLMNLGAMVTMLLAKVVVIILVYGWMIFLRWKQRPDPA.

The N-terminal stretch at 1–31 (MALLISLPGETPAMAQILLLLSSACLHAGNS) is a signal peptide. Residues 32-195 (ARSNGGNDFG…NPSLMNLGAM (164 aa)) are Extracellular-facing. Residues N90, N107, and N160 are each glycosylated (N-linked (GlcNAc...) asparagine). A helical transmembrane segment spans residues 196-216 (VTMLLAKVVVIILVYGWMIFL). The Cytoplasmic portion of the chain corresponds to 217-225 (RWKQRPDPA).

Its subcellular location is the membrane. Its function is as follows. Paired receptors consist of highly related activating and inhibitory receptors and are widely involved in the regulation of the immune system. PILRB2 is probably a cellular signaling activating receptor that associates with ITAM-bearing adapter molecules on the cell surface. In Mus musculus (Mouse), this protein is Paired immunoglobulin-like type 2 receptor beta-2 (Pilrb2).